Here is a 232-residue protein sequence, read N- to C-terminus: Purine nucleoside phosphorylase DeoD-type (232 aa).

His4 lines the a purine D-ribonucleoside pocket. Phosphate contacts are provided by residues Gly20, Arg24, Arg43, and 87-90; that span reads RIGT. A purine D-ribonucleoside is bound by residues 179-181 and 203-204; these read EME and SD. The active-site Proton donor is the Asp204.

The protein belongs to the PNP/UDP phosphorylase family. Homohexamer; trimer of homodimers.

It carries out the reaction a purine D-ribonucleoside + phosphate = a purine nucleobase + alpha-D-ribose 1-phosphate. The enzyme catalyses a purine 2'-deoxy-D-ribonucleoside + phosphate = a purine nucleobase + 2-deoxy-alpha-D-ribose 1-phosphate. Catalyzes the reversible phosphorolytic breakdown of the N-glycosidic bond in the beta-(deoxy)ribonucleoside molecules, with the formation of the corresponding free purine bases and pentose-1-phosphate. The sequence is that of Purine nucleoside phosphorylase DeoD-type from Caldanaerobacter subterraneus subsp. tengcongensis (strain DSM 15242 / JCM 11007 / NBRC 100824 / MB4) (Thermoanaerobacter tengcongensis).